A 743-amino-acid polypeptide reads, in one-letter code: Cytosolic endo-beta-N-acetylglucosaminidase (743 aa).

Met1 carries the N-acetylmethionine modification. Over residues 1 to 11 (MEAAAVTVTRS) the composition is skewed to low complexity. Positions 1-55 (MEAAAVTVTRSATRRRRRQLQGLAAPEAGTQEEQEDQEPRPRRRRPGRSIKDEEE) are disordered. A Phosphoserine modification is found at Ser66. The BRCT domain occupies 291-383 (RVFFDSCDGF…DFFQNQDKFW (93 aa)).

The protein belongs to the glycosyl hydrolase 85 family. In terms of tissue distribution, widely expressed. Expressed at higher level in thymus and spleen.

The protein resides in the cytoplasm. Its subcellular location is the cytosol. It catalyses the reaction an N(4)-(oligosaccharide-(1-&gt;3)-[oligosaccharide-(1-&gt;6)]-beta-D-Man-(1-&gt;4)-beta-D-GlcNAc-(1-&gt;4)-alpha-D-GlcNAc)-L-asparaginyl-[protein] + H2O = an oligosaccharide-(1-&gt;3)-[oligosaccharide-(1-&gt;6)]-beta-D-Man-(1-&gt;4)-D-GlcNAc + N(4)-(N-acetyl-beta-D-glucosaminyl)-L-asparaginyl-[protein]. In terms of biological role, endoglycosidase that releases N-glycans from glycoproteins by cleaving the beta-1,4-glycosidic bond in the N,N'-diacetylchitobiose core. Involved in the processing of free oligosaccharides in the cytosol. The polypeptide is Cytosolic endo-beta-N-acetylglucosaminidase (ENGASE) (Homo sapiens (Human)).